Reading from the N-terminus, the 159-residue chain is RNA pyrophosphohydrolase (159 aa).

One can recognise a Nudix hydrolase domain in the interval 6-149 (GFRPNVGIIL…KREVYRRALK (144 aa)). The Nudix box signature appears at 38 to 59 (GGINDRESPEEALYRELNEEVG).

The protein belongs to the Nudix hydrolase family. RppH subfamily. A divalent metal cation serves as cofactor.

Functionally, accelerates the degradation of transcripts by removing pyrophosphate from the 5'-end of triphosphorylated RNA, leading to a more labile monophosphorylated state that can stimulate subsequent ribonuclease cleavage. The polypeptide is RNA pyrophosphohydrolase (Ectopseudomonas mendocina (strain ymp) (Pseudomonas mendocina)).